We begin with the raw amino-acid sequence, 393 residues long: tRNA (guanine-N(7)-)-methyltransferase (393 aa).

The S-adenosyl-L-methionine site is built by Glu-124, Glu-149, and Asp-176. Asp-232 lines the substrate pocket.

This sequence belongs to the class I-like SAM-binding methyltransferase superfamily. TrmB family.

It catalyses the reaction guanosine(46) in tRNA + S-adenosyl-L-methionine = N(7)-methylguanosine(46) in tRNA + S-adenosyl-L-homocysteine. Its pathway is tRNA modification; N(7)-methylguanine-tRNA biosynthesis. Its function is as follows. Catalyzes the formation of N(7)-methylguanine at position 46 (m7G46) in tRNA. The polypeptide is tRNA (guanine-N(7)-)-methyltransferase (Helicobacter pylori (strain ATCC 700392 / 26695) (Campylobacter pylori)).